We begin with the raw amino-acid sequence, 238 residues long: Accessory gene regulator A (238 aa).

In terms of domain architecture, Response regulatory spans 2–125; that stretch reads KIFICEDDPK…LRTRIIDCLE (124 aa). Asp-59 is subject to 4-aspartylphosphate. Residues 143-238 form the HTH LytTR-type domain; sequence IELKRGSNSV…YASVRNVKKI (96 aa).

Its subcellular location is the cytoplasm. In terms of biological role, required for high-level post-exponential phase expression of a series of secreted proteins. This chain is Accessory gene regulator A (agrA), found in Staphylococcus aureus (strain COL).